The following is a 366-amino-acid chain: Neuropeptide Y receptor type 1 (366 aa).

At 1-39 the chain is on the extracellular side; sequence MNFSTYFENLSVPNNISGNITFPISEDCALPLPMIFTLA. Asn2, Asn9, and Asn15 each carry an N-linked (GlcNAc...) asparagine glycan. The helical transmembrane segment at 40-60 threads the bilayer; the sequence is LAYGAVIILGLSGNLALIIII. At 61-82 the chain is on the cytoplasmic side; it reads LKQKEMRNVTNILIVNLSFSDL. A helical membrane pass occupies residues 83 to 103; the sequence is LATIMCLPFTLIYTLMDHWIF. At 104–111 the chain is on the extracellular side; sequence GEVMCKLN. A disulfide bond links Cys108 and Cys193. The chain crosses the membrane as a helical span at residues 112-132; sequence EYIQCVSVTVSIFSLVLIAIE. Residues 133–149 are Cytoplasmic-facing; sequence RHQLIINPRGWRPNNRH. The helical transmembrane segment at 150 to 170 threads the bilayer; it reads ACFGITVIWGFAMACSTPLMM. Residues 171 to 203 lie on the Extracellular side of the membrane; that stretch reads YSVLTDEPFKNISLDSYIGKYVCLEDFPEDKFR. Asn181 carries an N-linked (GlcNAc...) asparagine glycan. Residues 204 to 224 form a helical membrane-spanning segment; sequence LSYTTLLFILQYLGPLCFIFV. At 225 to 260 the chain is on the cytoplasmic side; the sequence is CYTKIFLRLKRRNNMMDKIRDNKYRSSETKRINIML. Residues 261-281 form a helical membrane-spanning segment; it reads LSIVVGFALCWLPFFIFNLVF. Over 282 to 294 the chain is Extracellular; sequence DWNHEAVATCNHN. Residues 295 to 315 form a helical membrane-spanning segment; sequence LLFLICHLTAMISTCVNPIFY. Topologically, residues 316–366 are cytoplasmic; that stretch reads GFLNKNFQRDLQFFFNFCDFRSREDDYETIAMSTMHTDVSKTSLKQASPIA. Residue Cys333 is the site of S-palmitoyl cysteine attachment.

It belongs to the G-protein coupled receptor 1 family.

Its subcellular location is the cell membrane. Its function is as follows. Receptor for neuropeptide Y and peptide YY. This is Neuropeptide Y receptor type 1 (npy1r) from Xenopus laevis (African clawed frog).